A 144-amino-acid chain; its full sequence is uncharacterized protein (144 aa).

Polar residues predominate over residues 125 to 135 (PQQQNNHQLQS). A disordered region spans residues 125–144 (PQQQNNHQLQSKPKAASISR).

This is an uncharacterized protein from Rickettsia prowazekii (strain Madrid E).